The chain runs to 874 residues: Translation initiation factor IF-2 (874 aa).

A disordered region spans residues 1-262 (MEDKNKTIKE…EKSTSDRDFS (262 aa)). Over residues 54–63 (SKPPVMPLPL) the composition is skewed to pro residues. The segment covering 83–104 (AKREESPGKQDAGRPPRDKDTR) has biased composition (basic and acidic residues). Over residues 141–222 (SGGGYQGNRG…NRGPRSGGTG (82 aa)) the composition is skewed to gly residues. Polar residues predominate over residues 235–244 (LSQSRGSSVT). Positions 250-262 (HDKEKSTSDRDFS) are enriched in basic and acidic residues. The 170-residue stretch at 369-538 (NRPPVVTIMG…LLQAEVMDLK (170 aa)) folds into the tr-type G domain. Residues 378 to 385 (GHVDHGKT) form a G1 region. GTP is bound at residue 378-385 (GHVDHGKT). The G2 stretch occupies residues 403-407 (GITQH). The segment at 424–427 (DTPG) is G3. Residues 424–428 (DTPGH) and 478–481 (NKID) each bind GTP. The segment at 478-481 (NKID) is G4. The G5 stretch occupies residues 514-516 (SAR).

It belongs to the TRAFAC class translation factor GTPase superfamily. Classic translation factor GTPase family. IF-2 subfamily.

The protein localises to the cytoplasm. Its function is as follows. One of the essential components for the initiation of protein synthesis. Protects formylmethionyl-tRNA from spontaneous hydrolysis and promotes its binding to the 30S ribosomal subunits. Also involved in the hydrolysis of GTP during the formation of the 70S ribosomal complex. This chain is Translation initiation factor IF-2, found in Leptospira interrogans serogroup Icterohaemorrhagiae serovar copenhageni (strain Fiocruz L1-130).